The chain runs to 80 residues: Acyl carrier protein (80 aa).

The Carrier domain occupies 2 to 77 (SDIEQRVKKI…QAIDYAKAHV (76 aa)). The residue at position 37 (S37) is an O-(pantetheine 4'-phosphoryl)serine.

This sequence belongs to the acyl carrier protein (ACP) family. In terms of processing, 4'-phosphopantetheine is transferred from CoA to a specific serine of apo-ACP by AcpS. This modification is essential for activity because fatty acids are bound in thioester linkage to the sulfhydryl of the prosthetic group.

It localises to the cytoplasm. It functions in the pathway lipid metabolism; fatty acid biosynthesis. Carrier of the growing fatty acid chain in fatty acid biosynthesis. The polypeptide is Acyl carrier protein (Herminiimonas arsenicoxydans).